Here is a 408-residue protein sequence, read N- to C-terminus: Peptidase T (408 aa).

Residue His78 participates in Zn(2+) binding. Asp80 is a catalytic residue. Asp140 lines the Zn(2+) pocket. Residue Glu173 is the Proton acceptor of the active site. The Zn(2+) site is built by Glu174, Asp196, and His379.

Belongs to the peptidase M20B family. Zn(2+) serves as cofactor.

It is found in the cytoplasm. The catalysed reaction is Release of the N-terminal residue from a tripeptide.. Cleaves the N-terminal amino acid of tripeptides. The chain is Peptidase T from Shigella flexneri serotype 5b (strain 8401).